We begin with the raw amino-acid sequence, 336 residues long: Phenylalanine--tRNA ligase alpha subunit (336 aa).

Glu-259 is a binding site for Mg(2+).

This sequence belongs to the class-II aminoacyl-tRNA synthetase family. Phe-tRNA synthetase alpha subunit type 1 subfamily. As to quaternary structure, tetramer of two alpha and two beta subunits. It depends on Mg(2+) as a cofactor.

The protein localises to the cytoplasm. It carries out the reaction tRNA(Phe) + L-phenylalanine + ATP = L-phenylalanyl-tRNA(Phe) + AMP + diphosphate + H(+). This is Phenylalanine--tRNA ligase alpha subunit from Tropheryma whipplei (strain Twist) (Whipple's bacillus).